Consider the following 256-residue polypeptide: Probable fructose-2,6-bisphosphatase TIGAR A (256 aa).

The active-site Tele-phosphohistidine intermediate is the His11. The Proton donor/acceptor role is filled by Glu89. The interval 147-170 is disordered; it reads HQDKVQDGGTSSADESTEAPAGLA.

Belongs to the phosphoglycerate mutase family.

The protein resides in the cytoplasm. It is found in the nucleus. The protein localises to the mitochondrion. The catalysed reaction is beta-D-fructose 2,6-bisphosphate + H2O = beta-D-fructose 6-phosphate + phosphate. Its function is as follows. Fructose-bisphosphatase hydrolyzing fructose-2,6-bisphosphate as well as fructose-1,6-bisphosphate. Acts as a negative regulator of glycolysis by lowering intracellular levels of fructose-2,6-bisphosphate in a p53/TP53-dependent manner, resulting in the pentose phosphate pathway (PPP) activation and NADPH production. Contributes to the generation of reduced glutathione to cause a decrease in intracellular reactive oxygen species (ROS) content, correlating with its ability to protect cells from oxidative or metabolic stress-induced cell death. May play a role in mitophagy inhibition. This is Probable fructose-2,6-bisphosphatase TIGAR A from Danio rerio (Zebrafish).